The chain runs to 864 residues: Leucine--tRNA ligase (864 aa).

Residues 42–52 (PYPSGKLHMGH) carry the 'HIGH' region motif. The 'KMSKS' region signature appears at 624 to 628 (KMSKS). Lys627 lines the ATP pocket.

Belongs to the class-I aminoacyl-tRNA synthetase family.

It is found in the cytoplasm. It carries out the reaction tRNA(Leu) + L-leucine + ATP = L-leucyl-tRNA(Leu) + AMP + diphosphate. In Burkholderia ambifaria (strain ATCC BAA-244 / DSM 16087 / CCUG 44356 / LMG 19182 / AMMD) (Burkholderia cepacia (strain AMMD)), this protein is Leucine--tRNA ligase.